A 73-amino-acid chain; its full sequence is uncharacterized protein (73 aa).

This sequence belongs to the asfivirus DP63R family.

This is an uncharacterized protein from Ornithodoros (relapsing fever ticks).